A 464-amino-acid chain; its full sequence is Argininosuccinate lyase (464 aa).

The protein belongs to the lyase 1 family. Argininosuccinate lyase subfamily.

The protein resides in the cytoplasm. The catalysed reaction is 2-(N(omega)-L-arginino)succinate = fumarate + L-arginine. Its pathway is amino-acid biosynthesis; L-arginine biosynthesis; L-arginine from L-ornithine and carbamoyl phosphate: step 3/3. The chain is Argininosuccinate lyase from Chlorobium phaeobacteroides (strain DSM 266 / SMG 266 / 2430).